Here is a 117-residue protein sequence, read N- to C-terminus: Modulator protein MzrA (117 aa).

The Cytoplasmic segment spans residues 1 to 9; that stretch reads MNSPGLRKP. Residues 10–29 form a helical membrane-spanning segment; the sequence is TIWRPLLLLFPLLALLLSMS. Topologically, residues 30 to 117 are periplasmic; the sequence is SPRLPDEVML…THGTIRVARS (88 aa).

The protein belongs to the MzrA family. As to quaternary structure, interacts with EnvZ.

The protein localises to the cell inner membrane. In terms of biological role, modulates the activity of the EnvZ/OmpR two-component regulatory system, probably by directly modulating EnvZ enzymatic activity and increasing stability of phosphorylated OmpR. The protein is Modulator protein MzrA of Dickeya zeae (strain Ech586) (Dickeya dadantii (strain Ech586)).